Here is a 203-residue protein sequence, read N- to C-terminus: Large ribosomal subunit protein uL6 (203 aa).

This sequence belongs to the universal ribosomal protein uL6 family. Part of the 50S ribosomal subunit.

In terms of biological role, this protein binds to the 23S rRNA, and is important in its secondary structure. It is located near the subunit interface in the base of the L7/L12 stalk, and near the tRNA binding site of the peptidyltransferase center. The protein is Large ribosomal subunit protein uL6 of Hyphomonas neptunium (strain ATCC 15444).